A 547-amino-acid chain; its full sequence is Solute carrier family 22 member 7 (547 aa).

The next 12 helical transmembrane spans lie at 21-41 (VALLALPRVLLPMHFLLPIFL), 145-165 (ATSTFFFAGVLVGAVAFGYLS), 173-193 (LLLVAYVSALVLGLVSAASVS), 203-223 (LTGTALAGFTIIVMPLELEWL), 233-253 (VLSSTFWTGGVMLLALVGYLI), 258-278 (WLLLAVTLPCAPGILSLWWVP), 345-365 (ISLCCMVVWFGVNFSYYGLSL), 374-396 (VYQTQLLFGAVELPSKLLVYLSV), 403-423 (LTLAGTLLGTSLSLGFRLLVS), 431-451 (TALAVLGKGFSEAAFTTAYLF), 465-485 (MGLTALVGRLGGSLAPLAALL), and 492-512 (LPKLAYGGIALLAACTALLLP). The tract at residues 521–547 (ETIQDVERKSAPSSLQEEEMPMKQVQD) is disordered.

This sequence belongs to the major facilitator (TC 2.A.1) superfamily. Organic cation transporter (TC 2.A.1.19) family.

The protein localises to the basolateral cell membrane. It is found in the apical cell membrane. It localises to the cell membrane. The enzyme catalyses orotate(out) + L-glutamate(in) = orotate(in) + L-glutamate(out). It catalyses the reaction 3',5'-cyclic GMP(in) = 3',5'-cyclic GMP(out). The catalysed reaction is GMP(in) = GMP(out). It carries out the reaction 2'-deoxyguanosine(in) = 2'-deoxyguanosine(out). The enzyme catalyses GDP(in) = GDP(out). It catalyses the reaction guanosine(in) = guanosine(out). The catalysed reaction is GTP(in) = GTP(out). It carries out the reaction 3',5'-cyclic AMP(in) = 3',5'-cyclic AMP(out). The enzyme catalyses creatinine(in) = creatinine(out). It catalyses the reaction prostaglandin E2(out) = prostaglandin E2(in). The catalysed reaction is 2-oxoglutarate(in) = 2-oxoglutarate(out). It carries out the reaction glutarate(in) = glutarate(out). The enzyme catalyses urate(out) = urate(in). It catalyses the reaction estrone 3-sulfate(out) = estrone 3-sulfate(in). Functionally, functions as a Na(+)-independent bidirectional multispecific transporter. Contributes to the renal and hepatic elimination of endogenous organic compounds from the systemic circulation into the urine and bile, respectively. Capable of transporting a wide range of purine and pyrimidine nucleobases, nucleosides and nucleotides, with cGMP, 2'deoxyguanosine and GMP being the preferred substrates. Functions as a pH- and chloride-independent cGMP bidirectional facilitative transporter that can regulate both intracellular and extracellular levels of cGMP and may be involved in cGMP signaling pathways. Mediates orotate/glutamate bidirectional exchange and most likely display a physiological role in hepatic release of glutamate into the blood. Involved in renal secretion and possible reabsorption of creatinine. Able to uptake prostaglandin E2 (PGE2) and may contribute to PGE2 renal excretion. Also transports alpha-ketoglutarate and urate. Apart from the orotate/glutamate exchange, the counterions for the uptake of other SLC22A7/OAT2 substrates remain to be identified. This Sus scrofa (Pig) protein is Solute carrier family 22 member 7 (SLC22A7).